Here is a 229-residue protein sequence, read N- to C-terminus: Aspartate-rich protein 1 (229 aa).

A disordered region spans residues 84–106 (SEEDNDDAKILPSPVQGSSEDNL).

This is Aspartate-rich protein 1 (DRICH1) from Homo sapiens (Human).